Reading from the N-terminus, the 216-residue chain is Potassium-transporting ATPase KdpC subunit (216 aa).

A helical membrane pass occupies residues 12–32; that stretch reads LLGVSLLVFGLLYQGSLMAIG. Residues 197 to 207 show a composition bias toward polar residues; it reads QNETDQNSDMN. The disordered stretch occupies residues 197–216; sequence QNETDQNSDMNASEIANGDH.

Belongs to the KdpC family. The system is composed of three essential subunits: KdpA, KdpB and KdpC. The complex also contains KdpF, a small non-essential subunit.

It is found in the cell membrane. In terms of biological role, part of the high-affinity ATP-driven potassium transport (or Kdp) system, which catalyzes the hydrolysis of ATP coupled with the electrogenic transport of potassium into the cytoplasm. This subunit acts as a catalytic chaperone that increases the ATP-binding affinity of the ATP-hydrolyzing subunit KdpB by the formation of a transient KdpB/KdpC/ATP ternary complex. The Kdp system is essential for growth under K(+) limitation, and for survival under desiccation and salt crystal inclusion. The sequence is that of Potassium-transporting ATPase KdpC subunit from Halobacterium salinarum (strain ATCC 29341 / DSM 671 / R1).